A 451-amino-acid polypeptide reads, in one-letter code: Tubulin alpha-1 chain (451 aa).

GTP is bound at residue Gln-11. N6-acetyllysine is present on Lys-40. GTP contacts are provided by Glu-71, Gly-144, Thr-145, Thr-179, Asn-206, and Asn-228. Position 71 (Glu-71) interacts with Mg(2+). The active site involves Glu-254.

It belongs to the tubulin family. Dimer of alpha and beta chains. A typical microtubule is a hollow water-filled tube with an outer diameter of 25 nm and an inner diameter of 15 nM. Alpha-beta heterodimers associate head-to-tail to form protofilaments running lengthwise along the microtubule wall with the beta-tubulin subunit facing the microtubule plus end conferring a structural polarity. Microtubules usually have 13 protofilaments but different protofilament numbers can be found in some organisms and specialized cells. Mg(2+) serves as cofactor. In terms of processing, undergoes a tyrosination/detyrosination cycle, the cyclic removal and re-addition of a C-terminal tyrosine residue by the enzymes tubulin tyrosine carboxypeptidase (TTCP) and tubulin tyrosine ligase (TTL), respectively. Acetylation of alpha chains at Lys-40 stabilizes microtubules and affects affinity and processivity of microtubule motors. This modification has a role in multiple cellular functions, ranging from cell motility, cell cycle progression or cell differentiation to intracellular trafficking and signaling.

The protein localises to the cytoplasm. The protein resides in the cytoskeleton. The enzyme catalyses GTP + H2O = GDP + phosphate + H(+). Tubulin is the major constituent of microtubules, a cylinder consisting of laterally associated linear protofilaments composed of alpha- and beta-tubulin heterodimers. Microtubules grow by the addition of GTP-tubulin dimers to the microtubule end, where a stabilizing cap forms. Below the cap, tubulin dimers are in GDP-bound state, owing to GTPase activity of alpha-tubulin. In Eleusine indica (Goosegrass), this protein is Tubulin alpha-1 chain (TUBA1).